Consider the following 122-residue polypeptide: Urease subunit beta (122 aa).

The protein belongs to the urease beta subunit family. In terms of assembly, heterotrimer of UreA (gamma), UreB (beta) and UreC (alpha) subunits. Three heterotrimers associate to form the active enzyme.

It is found in the cytoplasm. The catalysed reaction is urea + 2 H2O + H(+) = hydrogencarbonate + 2 NH4(+). The protein operates within nitrogen metabolism; urea degradation; CO(2) and NH(3) from urea (urease route): step 1/1. The chain is Urease subunit beta from Flavobacterium johnsoniae (strain ATCC 17061 / DSM 2064 / JCM 8514 / BCRC 14874 / CCUG 350202 / NBRC 14942 / NCIMB 11054 / UW101) (Cytophaga johnsonae).